Reading from the N-terminus, the 589-residue chain is uncharacterized protein (589 aa).

The next 14 helical transmembrane spans lie at 90 to 110, 128 to 148, 162 to 182, 189 to 209, 217 to 237, 245 to 265, 284 to 304, 311 to 331, 355 to 375, 390 to 410, 419 to 439, 448 to 468, 483 to 503, and 545 to 565; these read YIVI…QTVI, SWIG…CGIM, IVLF…LWLV, GIGG…ITPL, GCMG…GGAI, WIFF…IFFL, FVGI…LNIG, AHAN…GFVV, VMVT…YIPV, VHTL…GMGI, PMIG…AIYY, GFLA…LIAV, AFML…AVIY, and IRMI…LSFF.

It belongs to the major facilitator superfamily. TCR/Tet family.

The protein resides in the membrane. This is an uncharacterized protein from Schizosaccharomyces pombe (strain 972 / ATCC 24843) (Fission yeast).